Reading from the N-terminus, the 288-residue chain is Nucleotide-binding protein NE1849 (288 aa).

8–15 (GLSGSGKS) is a binding site for ATP. A GTP-binding site is contributed by 57–60 (DMRS).

This sequence belongs to the RapZ-like family.

Displays ATPase and GTPase activities. The polypeptide is Nucleotide-binding protein NE1849 (Nitrosomonas europaea (strain ATCC 19718 / CIP 103999 / KCTC 2705 / NBRC 14298)).